We begin with the raw amino-acid sequence, 94 residues long: Integration host factor subunit beta (94 aa).

The protein belongs to the bacterial histone-like protein family. In terms of assembly, heterodimer of an alpha and a beta chain.

Its function is as follows. This protein is one of the two subunits of integration host factor, a specific DNA-binding protein that functions in genetic recombination as well as in transcriptional and translational control. This Vibrio atlanticus (strain LGP32) (Vibrio splendidus (strain Mel32)) protein is Integration host factor subunit beta.